A 224-amino-acid chain; its full sequence is Putative O-methyltransferase MMAR_4217 (224 aa).

A compositionally biased stretch (polar residues) spans Met1–Pro11. Positions Met1–Glu20 are disordered. Residues Val51, Glu73, Gly75 to Thr76, Ser81, Asp99, and Ile100 each bind S-adenosyl-L-methionine. Asp147 serves as a coordination point for substrate. Asp149 serves as a coordination point for S-adenosyl-L-methionine.

It belongs to the class I-like SAM-binding methyltransferase superfamily. Cation-dependent O-methyltransferase family.

The protein is Putative O-methyltransferase MMAR_4217 of Mycobacterium marinum (strain ATCC BAA-535 / M).